Reading from the N-terminus, the 526-residue chain is Cyclin-L1 (526 aa).

Positions 1 to 36 (MASGPHSTATAAAAASSAAPSAGGSSSGTTTTTTTT) are disordered. Cyclin-like regions lie at residues 88-190 (ELIQ…RVLK) and 203-287 (KIIV…ETLR). Residues 318-526 (KGLNPDGTPA…SRSGHGRHRR (209 aa)) form a disordered region. T325 carries the post-translational modification Phosphothreonine. 2 positions are modified to phosphoserine: S335 and S338. Glycyl lysine isopeptide (Lys-Gly) (interchain with G-Cter in SUMO2) cross-links involve residues K339 and K347. Basic and acidic residues predominate over residues 342–352 (SPREVKAEEKS). 2 positions are modified to phosphoserine: S352 and S355. The span at 361-370 (VKKEPEDRQQ) shows a compositional bias: basic and acidic residues. A Glycyl lysine isopeptide (Lys-Gly) (interchain with G-Cter in SUMO2) cross-link involves residue K362. Phosphoserine is present on S374. Basic residues-rich tracts occupy residues 382-418 (DSKR…RRSR), 438-452 (RRHH…KAKH), 460-476 (SNRH…RSQS), and 486-498 (KKHR…HRDR). Residues 390–432 (RSASRSRSRTRSRSRSHTPRRHYNNRRSRSGTYSSRSRSRSRS) form an RS region. The residue at position 445 (S445) is a Phosphoserine. Over residues 499 to 508 (RERSRSFERS) the composition is skewed to basic and acidic residues. The segment covering 509 to 526 (HKSKHHGGSRSGHGRHRR) has biased composition (basic residues).

It belongs to the cyclin family. Cyclin L subfamily. (Microbial infection) Interacts with human herpes virus 1 (HHV-1) transcriptional regulator ICP22. As to quaternary structure, interacts with POLR2A via its hyperphosphorylated C-terminal domain (CTD). Interacts with CDK11A, CDK12 and CDK13. Isoforms 1 and 2, but not isoform 3, interact with CDK11B. May form a ternary complex with CDK11B and casein kinase II (CKII). Interacts with pre-mRNA-splicing factors, including at least SRSF1, SRSF2 and SRSF7/SLU7. As to expression, widely expressed. Overexpression in primary tumors of head and neck squamous cell carcinomas (HNSCC).

It localises to the nucleus speckle. It is found in the nucleus. The protein resides in the nucleoplasm. Functionally, involved in pre-mRNA splicing. Functions in association with cyclin-dependent kinases (CDKs). Inhibited by the CDK-specific inhibitor CDKN1A/p21. May play a role in the regulation of RNA polymerase II (pol II). May be a candidate proto-oncogene in head and neck squamous cell carcinomas (HNSCC). The chain is Cyclin-L1 (CCNL1) from Homo sapiens (Human).